Reading from the N-terminus, the 136-residue chain is ATP synthase epsilon chain (136 aa).

It belongs to the ATPase epsilon chain family. In terms of assembly, F-type ATPases have 2 components, CF(1) - the catalytic core - and CF(0) - the membrane proton channel. CF(1) has five subunits: alpha(3), beta(3), gamma(1), delta(1), epsilon(1). CF(0) has three main subunits: a, b and c.

Its subcellular location is the cell inner membrane. Produces ATP from ADP in the presence of a proton gradient across the membrane. The chain is ATP synthase epsilon chain from Afipia carboxidovorans (strain ATCC 49405 / DSM 1227 / KCTC 32145 / OM5) (Oligotropha carboxidovorans).